We begin with the raw amino-acid sequence, 520 residues long: Cyclic AMP-responsive element-binding protein 3-like protein 2 (520 aa).

Topologically, residues 1–379 (MEVLESGEQG…KLAGTQTGTC (379 aa)) are cytoplasmic. At Ser93 the chain carries Phosphoserine. A Glycyl lysine isopeptide (Lys-Gly) (interchain with G-Cter in SUMO2) cross-link involves residue Lys178. Position 191 is a phosphoserine (Ser191). A disordered region spans residues 195–264 (APVDHLHLPP…PHKLQGSGPL (70 aa)). 2 stretches are compositionally biased toward low complexity: residues 208–220 (SSHG…SLSP) and 234–255 (SPSR…LTAP). Residues 294–357 (ALKKIRRKIK…RTLLQQLQKL (64 aa)) form the bZIP domain. The tract at residues 296–325 (KKIRRKIKNKISAQESRRKKKEYMDSLEKK) is basic motif. The tract at residues 336–357 (LRKKVEVLENTNRTLLQQLQKL) is leucine-zipper. The helical; Signal-anchor for type II membrane protein transmembrane segment at 380-400 (LMVVVLCFAVAFGSFFQGYGP) threads the bilayer. Residues 401 to 520 (YPSATKMALP…ELDRRVNTTF (120 aa)) are Lumenal-facing. Residues 427–430 (RNLL) carry the S1P recognition motif. Residues Asn480, Asn504, and Asn517 are each glycosylated (N-linked (GlcNAc...) asparagine).

It belongs to the bZIP family. ATF subfamily. As to quaternary structure, binds DNA as a dimer. In terms of processing, upon ER stress, translocated to the Golgi apparatus, where it is processed by regulated intramembrane proteolysis (RIP) to release the cytosol-facing N-terminal transcription factor domain. The cleavage is performed sequentially by site-1 and site-2 proteases (S1P/MBTPS1 and S2P/MBTPS2). N-glycosylated. Post-translationally, ubiquitinated by HRD1/SYVN1; undergoes 'Lys-48'-linked ubiquitination, followed by rapid proteasomal degradation under normal conditions. Upon ER stress, SYVN1 E3 ubiquitin-protein ligase dissociates from its substrate, ubiquitination does not occur and CREB3L2 is stabilized. As to expression, widely expressed with highest levels in placenta, lung, spleen and intestine, and lowest levels in heart, brain, skeletal muscle, thymus, colon and leukocytes. In fetal tissues, the weakest expression is detected in brain and heart.

Its subcellular location is the endoplasmic reticulum membrane. It localises to the nucleus. Transcription factor involved in unfolded protein response (UPR). In the absence of endoplasmic reticulum (ER) stress, inserted into ER membranes, with N-terminal DNA-binding and transcription activation domains oriented toward the cytosolic face of the membrane. In response to ER stress, transported to the Golgi, where it is cleaved in a site-specific manner by resident proteases S1P/MBTPS1 and S2P/MBTPS2. The released N-terminal cytosolic domain is translocated to the nucleus to effect transcription of specific target genes. Plays a critical role in chondrogenesis by activating the transcription of SEC23A, which promotes the transport and secretion of cartilage matrix proteins, and possibly that of ER biogenesis-related genes. In a neuroblastoma cell line, protects cells from ER stress-induced death. In vitro activates transcription of target genes via direct binding to the CRE site. The protein is Cyclic AMP-responsive element-binding protein 3-like protein 2 (CREB3L2) of Homo sapiens (Human).